A 239-amino-acid chain; its full sequence is Probable transcriptional regulatory protein EF_2866 (239 aa).

It belongs to the TACO1 family. YeeN subfamily.

The protein resides in the cytoplasm. In Enterococcus faecalis (strain ATCC 700802 / V583), this protein is Probable transcriptional regulatory protein EF_2866.